The following is a 451-amino-acid chain: UDP-N-acetylmuramoylalanine--D-glutamate ligase (451 aa).

Gly118–Thr124 is an ATP binding site.

It belongs to the MurCDEF family.

It is found in the cytoplasm. It carries out the reaction UDP-N-acetyl-alpha-D-muramoyl-L-alanine + D-glutamate + ATP = UDP-N-acetyl-alpha-D-muramoyl-L-alanyl-D-glutamate + ADP + phosphate + H(+). It functions in the pathway cell wall biogenesis; peptidoglycan biosynthesis. Functionally, cell wall formation. Catalyzes the addition of glutamate to the nucleotide precursor UDP-N-acetylmuramoyl-L-alanine (UMA). The protein is UDP-N-acetylmuramoylalanine--D-glutamate ligase of Shouchella clausii (strain KSM-K16) (Alkalihalobacillus clausii).